The chain runs to 504 residues: Histidine ammonia-lyase (504 aa).

The segment at residues alanine 142–glycine 144 is a cross-link (5-imidazolinone (Ala-Gly)). Serine 143 is subject to 2,3-didehydroalanine (Ser).

It belongs to the PAL/histidase family. Contains an active site 4-methylidene-imidazol-5-one (MIO), which is formed autocatalytically by cyclization and dehydration of residues Ala-Ser-Gly.

The protein resides in the cytoplasm. The catalysed reaction is L-histidine = trans-urocanate + NH4(+). The protein operates within amino-acid degradation; L-histidine degradation into L-glutamate; N-formimidoyl-L-glutamate from L-histidine: step 1/3. This chain is Histidine ammonia-lyase, found in Staphylococcus aureus (strain bovine RF122 / ET3-1).